A 209-amino-acid polypeptide reads, in one-letter code: Guanylate kinase (209 aa).

The Guanylate kinase-like domain occupies glycine 8–arginine 186. Alanine 15–threonine 22 is an ATP binding site.

Belongs to the guanylate kinase family.

It is found in the cytoplasm. It carries out the reaction GMP + ATP = GDP + ADP. Functionally, essential for recycling GMP and indirectly, cGMP. This is Guanylate kinase from Thiobacillus denitrificans (strain ATCC 25259 / T1).